We begin with the raw amino-acid sequence, 430 residues long: Drebrin-like protein (430 aa).

Residues 4-133 (NLSRNGPALQ…EPECIMEKVA (130 aa)) form the ADF-H domain. T26 is modified (phosphothreonine). Phosphoserine is present on residues G137 and S160. K176 bears the N6-acetyllysine mark. Residues 176–231 (KDSFWAKAEKEEENRRLEEKRRAEEAQRQLEQERRERELREAARREQRYQEQGGEA) are a coiled coil. A phosphoserine mark is found at A183 and S232. Residues 219 to 283 (RREQRYQEQG…SSPQPGKLRS (65 aa)) form a disordered region. A compositionally biased stretch (polar residues) spans 233–244 (PQRTWEQQQEVV). The span at 245–267 (SRNRNEQESAVHPREIFKQKERA) shows a compositional bias: basic and acidic residues. Residues 268 to 277 (MSTTSISSPQ) show a composition bias toward polar residues. Phosphoserine is present on residues S269, S272, S275, and S283. K288 bears the N6-acetyllysine mark. Phosphothreonine is present on T291. Phosphotyrosine is present on residues Y334 and Y344. Positions 371-430 (GQGLCARALYDYQAADDTEISFDPENLITGIEVIDEGWWRGYGPDGHFGMFPANYVELIE) constitute an SH3 domain.

This sequence belongs to the ABP1 family. Interacts with SHANK2, SHANK3 and SYN1. Interacts with FGD1 and DNM1. Interacts with ANKRD54. Interacts with COBL. Interacts with WASL and WIPF1. Interacts with MAP4K1 and PRAM1. Degraded by caspases during apoptosis.

Its subcellular location is the cytoplasm. It localises to the cytoskeleton. The protein resides in the cell projection. The protein localises to the lamellipodium. It is found in the ruffle. Its subcellular location is the cell cortex. It localises to the cytosol. The protein resides in the synapse. The protein localises to the perikaryon. It is found in the neuron projection. Its subcellular location is the cell membrane. It localises to the cytoplasmic vesicle. The protein resides in the clathrin-coated vesicle membrane. The protein localises to the golgi apparatus membrane. It is found in the podosome. Its subcellular location is the early endosome. It localises to the dendrite. The protein resides in the postsynaptic density. Its function is as follows. Adapter protein that binds F-actin and DNM1, and thereby plays a role in receptor-mediated endocytosis. Plays a role in the reorganization of the actin cytoskeleton, formation of cell projections, such as neurites, in neuron morphogenesis and synapse formation via its interaction with WASL and COBL. Does not bind G-actin and promote actin polymerization by itself. Required for the formation of organized podosome rosettes. May act as a common effector of antigen receptor-signaling pathways in leukocytes. Acts as a key component of the immunological synapse that regulates T-cell activation by bridging TCRs and the actin cytoskeleton to gene activation and endocytic processes. The chain is Drebrin-like protein (DBNL) from Homo sapiens (Human).